Here is a 214-residue protein sequence, read N- to C-terminus: Soluble inorganic pyrophosphatase (214 aa).

The interval 1–20 is disordered; it reads MSEEDKTAASAEQPKRAPKL. Positions 64, 78, and 90 each coordinate substrate. The Mg(2+) site is built by Asp100, Asp105, and Asp137. Tyr174 provides a ligand contact to substrate.

It belongs to the PPase family. It depends on Mg(2+) as a cofactor.

It is found in the cytoplasm. The enzyme catalyses diphosphate + H2O = 2 phosphate + H(+). The protein is Soluble inorganic pyrophosphatase (IPP) of Zea mays (Maize).